The chain runs to 469 residues: 6-phospho-beta-galactosidase (469 aa).

D-galactose 6-phosphate contacts are provided by Q19, H116, N159, E160, and N297. The Proton donor role is filled by E160. E375 (nucleophile) is an active-site residue. D-galactose 6-phosphate contacts are provided by S428, W429, K435, and Y437.

Belongs to the glycosyl hydrolase 1 family.

It carries out the reaction a 6-phospho-beta-D-galactoside + H2O = D-galactose 6-phosphate + an alcohol. Its pathway is carbohydrate metabolism; lactose degradation; D-galactose 6-phosphate and beta-D-glucose from lactose 6-phosphate: step 1/1. This chain is 6-phospho-beta-galactosidase, found in Streptococcus equi subsp. zooepidemicus (strain MGCS10565).